Reading from the N-terminus, the 306-residue chain is Glutathione transport system permease protein GsiC (306 aa).

Residues 1-8 (MLNYVIKR) are Cytoplasmic-facing. The helical transmembrane segment at 9 to 29 (LLGLIPTLFIVSVLVFLFVHM) threads the bilayer. Residues 30-102 (LPGDPARLIA…SRFMPTLWLT (73 aa)) lie on the Periplasmic side of the membrane. The ABC transmembrane type-1 domain occupies 95 to 292 (FMPTLWLTIT…LEFILINLVV (198 aa)). The chain crosses the membrane as a helical span at residues 103-123 (ITSMVWAVIFGMAAGIIAAVW). Residues 124 to 134 (RNRWPDRLSMT) are Cytoplasmic-facing. The helical transmembrane segment at 135 to 155 (IAVSGISFPAFALGMLLIQVF) threads the bilayer. Topologically, residues 156–168 (SVELGWLPTVGAD) are periplasmic. The helical transmembrane segment at 169–189 (SWQHYILPSLTLGAAVAAVMA) threads the bilayer. Over 190–228 (RFTRASFVDVLSEDYMRTARAKGVSETWVVLKHGLRNAM) the chain is Cytoplasmic. The chain crosses the membrane as a helical span at residues 229–249 (IPVVTMMGLQFGFLLGGSIVV). Residues 250–277 (EKVFNWPGLGRLLVDSVEMRDYPVIQAE) are Periplasmic-facing. A helical transmembrane segment spans residues 278–298 (ILLFSLEFILINLVVDVLYAA). The Cytoplasmic segment spans residues 299-306 (INPAIRYK).

Belongs to the binding-protein-dependent transport system permease family. The complex is composed of two ATP-binding proteins (GsiA), two transmembrane proteins (GsiC and GsiD) and a solute-binding protein (GsiB).

It localises to the cell inner membrane. Part of the ABC transporter complex GsiABCD involved in glutathione import. Probably responsible for the translocation of the substrate across the membrane. The protein is Glutathione transport system permease protein GsiC of Escherichia coli O6:H1 (strain CFT073 / ATCC 700928 / UPEC).